Here is a 166-residue protein sequence, read N- to C-terminus: Prorelaxin H2 (166 aa).

The signal sequence occupies residues 1 to 5 (SRAVA). 3 disulfides stabilise this stretch: Cys-16/Cys-153, Cys-28/Cys-166, and Cys-152/Cys-157. Residues 37–138 (SLSQEDAPQT…LKYLGLDTHS (102 aa)) constitute a propeptide, connecting peptide.

This sequence belongs to the insulin family. Heterodimer of a B chain and an A chain linked by two disulfide bonds. As to expression, expressed in the corpus luteum of pregnancy and in the placenta.

Its subcellular location is the secreted. Functionally, relaxin is an ovarian hormone that acts with estrogen to produce dilatation of the birth canal in many mammals. May be involved in remodeling of connective tissues during pregnancy, promoting growth of pubic ligaments and ripening of the cervix. The polypeptide is Prorelaxin H2 (RNL2) (Pan troglodytes (Chimpanzee)).